The following is a 357-amino-acid chain: Aurora kinase A- and ninein-interacting protein (357 aa).

Positions 72–93 (TSQQGKTNGADQRSVSSHTESQ) are enriched in polar residues. A disordered region spans residues 72 to 102 (TSQQGKTNGADQRSVSSHTESQTNKESKEDA). The interval 189–357 (QKEGEDSSCE…EGNQVIRHQA (169 aa)) is interaction with AURKA. The tract at residues 281–357 (KDSWSQLFTE…EGNQVIRHQA (77 aa)) is interaction with RBBP8/CtIP. Ser-292 is subject to Phosphoserine.

It belongs to the AUNIP family. As to quaternary structure, interacts (via C-terminus) with AURKA (via C-terminus). Interacts (via N-terminus) with NIN; this interaction blocks NIN phosphorylation by both AURKA and GSK3B. Identified in a complex with NIN and AURKA. Interacts with RBBP8/CtIP.

It localises to the nucleus. The protein resides in the chromosome. The protein localises to the cytoplasm. Its subcellular location is the cytoskeleton. It is found in the microtubule organizing center. It localises to the centrosome. The protein resides in the spindle pole. DNA-binding protein that accumulates at DNA double-strand breaks (DSBs) following DNA damage and promotes DNA resection and homologous recombination. Serves as a sensor of DNA damage: binds DNA with a strong preference for DNA substrates that mimic structures generated at stalled replication forks, and anchors RBBP8/CtIP to DSB sites to promote DNA end resection and ensuing homologous recombination repair. Inhibits non-homologous end joining (NHEJ). Required for the dynamic movement of AURKA at the centrosomes and spindle apparatus during the cell cycle. This chain is Aurora kinase A- and ninein-interacting protein, found in Bos taurus (Bovine).